The sequence spans 526 residues: Zinc finger protein Helios (526 aa).

A disordered region spans residues 28-94 (DLTSSTPNGQ…IESSEVADNR (67 aa)). The span at 29–50 (LTSSTPNGQHASPSHMTSTNSV) shows a compositional bias: polar residues. At serine 56 the chain carries Phosphoserine. Residues 61–77 (DRQPLSREDEIRGHDEG) show a composition bias toward basic and acidic residues. Serine 78 and serine 79 each carry phosphoserine. A Glycyl lysine isopeptide (Lys-Gly) (interchain with G-Cter in SUMO2) cross-link involves residue lysine 95. 4 C2H2-type zinc fingers span residues 112–134 (LKCD…KRSH), 140–162 (FHCN…IKLH), 168–190 (FKCP…LRTH), and 196–219 (HKCN…ERCH). An N6-acetyllysine modification is found at lysine 288. Residues 368–379 (ISRETSDSHENN) show a composition bias toward basic and acidic residues. The tract at residues 368 to 435 (ISRETSDSHE…LNPKRKQSPA (68 aa)) is disordered. Glycyl lysine isopeptide (Lys-Gly) (interchain with G-Cter in SUMO2) cross-links involve residues lysine 442 and lysine 448. 2 C2H2-type zinc fingers span residues 471–493 (FKCE…MGCH) and 499–523 (LECN…RGEH).

This sequence belongs to the Ikaros C2H2-type zinc-finger protein family. In terms of assembly, can form homodimers. Interacts with IKZF4 and IKZF5. Expressed in outer hair cells (OHC) of the organ of Corti. Abundant in thymus, low expression in bone marrow and brain and no detectable expression in spleen, liver, kidney or muscle. Expressed in T-cells.

The protein localises to the nucleus. Transcriptional regulator required for outer hair cells (OHC) maturation and, consequently, for hearing. The sequence is that of Zinc finger protein Helios (Ikzf2) from Mus musculus (Mouse).